The chain runs to 436 residues: 3-ketoacyl-CoA thiolase (436 aa).

The active-site Acyl-thioester intermediate is Cys99. Residues His392 and Cys422 each act as proton acceptor in the active site.

It belongs to the thiolase-like superfamily. Thiolase family. In terms of assembly, heterotetramer of two alpha chains (FadJ) and two beta chains (FadI).

It localises to the cytoplasm. It carries out the reaction an acyl-CoA + acetyl-CoA = a 3-oxoacyl-CoA + CoA. Its pathway is lipid metabolism; fatty acid beta-oxidation. In terms of biological role, catalyzes the final step of fatty acid oxidation in which acetyl-CoA is released and the CoA ester of a fatty acid two carbons shorter is formed. In Shigella flexneri serotype 5b (strain 8401), this protein is 3-ketoacyl-CoA thiolase.